The primary structure comprises 247 residues: 5'-nucleotidase SurE (247 aa).

4 residues coordinate a divalent metal cation: D8, D9, S39, and N91.

The protein belongs to the SurE nucleotidase family. A divalent metal cation serves as cofactor.

The protein localises to the cytoplasm. The enzyme catalyses a ribonucleoside 5'-phosphate + H2O = a ribonucleoside + phosphate. Functionally, nucleotidase that shows phosphatase activity on nucleoside 5'-monophosphates. The chain is 5'-nucleotidase SurE from Leptospira biflexa serovar Patoc (strain Patoc 1 / Ames).